Reading from the N-terminus, the 546-residue chain is MAFNFNWSPLMADAGFYTRAQELLTAALNKSPKPPIIVGDITVTELNLGSIPPELEILEIGDLADDRFRGIFKMSYSGDAYLTLKTCVQANSLNTYMVTRPKFTSPCPLAADHGLTIPLQITLSDIKLSGFVVLVFSKQKGITLVFRNDPLESLKVSSTFDSIPFVRDYLQRTIEGQLRLLFMDELPAIIHRLSLRLWVPELRGQDTEVKADEEAGPGQDPLLSPPQDPVDASGNVLSVAQIASLSLDSGVEMHSLFSQRNLVRLATLTDSQRTLSLFTPTIHDVVFRALTGAMEQSESHGGLISPASPPLSRTHSHVASLHSLQESSMSKSSLGSPLSGCGLTMGAGRHPRTRPSRKHKRRVVDLRKPQKLDDTSSTCTDSEYTVSTDASTVFSSSARVGEKPDDPITPPVSPDATIKVKDRSRVPAMQGLGPSVTNKAGQSTPSAEAEKITLSNGEPSYIPHQNTPTIEAHEKGDDNTISLNGVPPSMLSFVAVSQDRSILEQAWMMKLANEISRRIQEGKGPGSVGSNYCGRRDPSPPPAYGQ.

Residues 1–195 (MAFNFNWSPL…LPAIIHRLSL (195 aa)) form the SMP-LTD domain. 5 disordered regions span residues 208–230 (EVKA…QDPV), 299–319 (SHGG…SHVA), 344–382 (TMGA…CTDS), 395–416 (SSSA…SPDA), and 517–546 (RRIQ…AYGQ). The span at 349–362 (RHPRTRPSRKHKRR) shows a compositional bias: basic residues. A compositionally biased stretch (basic and acidic residues) spans 363–374 (VVDLRKPQKLDD).

It belongs to the MDM34 family. Component of the ER-mitochondria encounter structure (ERMES) or MDM complex, composed of MMM1, MDM10, MDM12 and MDM34.

It is found in the mitochondrion outer membrane. Component of the ERMES/MDM complex, which serves as a molecular tether to connect the endoplasmic reticulum (ER) and mitochondria. Components of this complex are involved in the control of mitochondrial shape and protein biogenesis, and function in nonvesicular lipid trafficking between the ER and mitochondria. MDM34 is required for the interaction of the ER-resident membrane protein MMM1 and the outer mitochondrial membrane-resident beta-barrel protein MDM10. This Arthroderma otae (strain ATCC MYA-4605 / CBS 113480) (Microsporum canis) protein is Mitochondrial distribution and morphology protein 34.